We begin with the raw amino-acid sequence, 171 residues long: Peptide methionine sulfoxide reductase MsrA (171 aa).

Cys12 is an active-site residue.

It belongs to the MsrA Met sulfoxide reductase family.

It catalyses the reaction L-methionyl-[protein] + [thioredoxin]-disulfide + H2O = L-methionyl-(S)-S-oxide-[protein] + [thioredoxin]-dithiol. The catalysed reaction is [thioredoxin]-disulfide + L-methionine + H2O = L-methionine (S)-S-oxide + [thioredoxin]-dithiol. In terms of biological role, has an important function as a repair enzyme for proteins that have been inactivated by oxidation. Catalyzes the reversible oxidation-reduction of methionine sulfoxide in proteins to methionine. The protein is Peptide methionine sulfoxide reductase MsrA of Leuconostoc mesenteroides subsp. mesenteroides (strain ATCC 8293 / DSM 20343 / BCRC 11652 / CCM 1803 / JCM 6124 / NCDO 523 / NBRC 100496 / NCIMB 8023 / NCTC 12954 / NRRL B-1118 / 37Y).